The sequence spans 1379 residues: Increased rDNA silencing protein 4 homolog (1379 aa).

Disordered stretches follow at residues 1-25 (MDAI…RNLS), 138-159 (TSTR…HHPR), 240-314 (EFDF…PLPS), 337-370 (SQPF…QAIM), 534-573 (ASKR…ASQQ), 768-816 (TDLH…NDIG), 1047-1110 (DAPS…KDSQ), and 1168-1208 (AVHE…DGKY). Over residues 250 to 259 (PSDKNLEKLK) the composition is skewed to basic and acidic residues. Polar residues predominate over residues 262–287 (ASKQASESQSLKNMESLSLARSSPIL). Over residues 541 to 555 (SQQTESASKSSSNIS) the composition is skewed to low complexity. Positions 562-573 (PPSNFSISASQQ) are enriched in polar residues. Residues 770-780 (LHRKPRRKHKS) show a composition bias toward basic residues. Residues 793–802 (DESPQSDEVE) are compositionally biased toward acidic residues. Positions 1240–1329 (AANKGYLLSK…DSVWLSSKRM (90 aa)) constitute an EH domain. Residues 1273-1308 (APTSVLAKIYDLVDRHHTGVLGRDEFIVGMFLIDQY) form the EF-hand domain.

The protein belongs to the IRS4 family.

Its function is as follows. Positive regulator of phosphatidylinositol 4,5-bisphosphate turnover and negatively regulates signaling through the cell integrity pathway. Involved in rDNA silencing. The sequence is that of Increased rDNA silencing protein 4 homolog from Schizosaccharomyces pombe (strain 972 / ATCC 24843) (Fission yeast).